The sequence spans 446 residues: Probable glycine dehydrogenase (decarboxylating) subunit 1 (446 aa).

Belongs to the GcvP family. N-terminal subunit subfamily. In terms of assembly, the glycine cleavage system is composed of four proteins: P, T, L and H. In this organism, the P 'protein' is a heterodimer of two subunits.

The enzyme catalyses N(6)-[(R)-lipoyl]-L-lysyl-[glycine-cleavage complex H protein] + glycine + H(+) = N(6)-[(R)-S(8)-aminomethyldihydrolipoyl]-L-lysyl-[glycine-cleavage complex H protein] + CO2. Functionally, the glycine cleavage system catalyzes the degradation of glycine. The P protein binds the alpha-amino group of glycine through its pyridoxal phosphate cofactor; CO(2) is released and the remaining methylamine moiety is then transferred to the lipoamide cofactor of the H protein. The polypeptide is Probable glycine dehydrogenase (decarboxylating) subunit 1 (Coxiella burnetii (strain CbuK_Q154) (Coxiella burnetii (strain Q154))).